We begin with the raw amino-acid sequence, 730 residues long: MSFFLSNLTNDSRLWKVSHNSTDLMNSPETLTLSLFCLICLMTLVALVGSIFSLVSLLTMQYRTVVSMLVTSWSVDDLLSVLSVAIFMVLQWPREAPGYFQSLCTTSALLYMCQGLSSNLKATLIVFYNFYTMHRTVVSQSSSWRSGQVLGVALTVWAVSLLLASLPLCGWGVFVRTPWGCLTDCSSPYVLLLFAVYASAFGLLAVLSVPLTHQLLCSEEPPRLHANYQEISRGASTPGTPAAGGRVLCLLPEDVEIPALPGTGSSLSSDMVFAPGQPAASSAGAGKRENLWTPRGSSSFPVSLAQKRFALILALTKVILWLPMMIHMVVKHVVGFQSLPVDMLSFLLTLLASTVTPVFVLSKRWAHLPCGCIINCQPDTYSVAFDGKKSKRKGFEFNLSFQQSYGLYKMTHADYYDDDDENPISYHNPKKYECEATKEPREDNHGVFNTITVEISTTPPLDSATLTGVNKCTNTDIPEPKQAVSEEKGAFSIKTECAINYGEATSFEGPERRLSHEETQKPDLSDWEWCRSKSERTPRQRSGGGLAIPICAFQGTVSLQAPTGKTLSLSTYEVSAEGQKITPPSKKIEVYRSKSVGHEPNSEESPSTFADTNVKIHLEVLEICDNDEALDTVSIISNISQSSTKVRSPSLRYSRKENRFVSCDLGETASYSLFLPTSDPDGDINISIPDTVEAHRQNSRRQHQDRDGYQEEIQLLNKAYRKREAESKGN.

The Extracellular segment spans residues 1–34 (MSFFLSNLTNDSRLWKVSHNSTDLMNSPETLTLS). Residues N7, N10, and N20 are each glycosylated (N-linked (GlcNAc...) asparagine). Residues 35–55 (LFCLICLMTLVALVGSIFSLV) traverse the membrane as a helical segment. Residues 56-68 (SLLTMQYRTVVSM) lie on the Cytoplasmic side of the membrane. Residues 69-89 (LVTSWSVDDLLSVLSVAIFMV) form a helical membrane-spanning segment. At 90-108 (LQWPREAPGYFQSLCTTSA) the chain is on the extracellular side. A disulfide bridge links C104 with C181. Residues 109-131 (LLYMCQGLSSNLKATLIVFYNFY) traverse the membrane as a helical segment. Residues 132–148 (TMHRTVVSQSSSWRSGQ) are Cytoplasmic-facing. A helical membrane pass occupies residues 149 to 169 (VLGVALTVWAVSLLLASLPLC). The Extracellular segment spans residues 170-188 (GWGVFVRTPWGCLTDCSSP). The chain crosses the membrane as a helical span at residues 189–209 (YVLLLFAVYASAFGLLAVLSV). Over 210–308 (PLTHQLLCSE…SFPVSLAQKR (99 aa)) the chain is Cytoplasmic. A helical membrane pass occupies residues 309–329 (FALILALTKVILWLPMMIHMV). Topologically, residues 330–340 (VKHVVGFQSLP) are extracellular. Residues 341-361 (VDMLSFLLTLLASTVTPVFVL) form a helical membrane-spanning segment. At 362 to 730 (SKRWAHLPCG…RKREAESKGN (369 aa)) the chain is on the cytoplasmic side.

This sequence belongs to the G-protein coupled receptor 1 family. As to expression, expressed exclusively in brain and testis.

It localises to the cell membrane. In terms of biological role, orphan receptor. The sequence is that of Probable G-protein coupled receptor 149 (Gpr149) from Rattus norvegicus (Rat).